A 168-amino-acid polypeptide reads, in one-letter code: 6,7-dimethyl-8-ribityllumazine synthase (168 aa).

5-amino-6-(D-ribitylamino)uracil-binding positions include W31, 65–67, and 90–92; these read SFE and NVI. 95-96 contacts (2S)-2-hydroxy-3-oxobutyl phosphate; sequence ET. H98 functions as the Proton donor in the catalytic mechanism. Residue F123 coordinates 5-amino-6-(D-ribitylamino)uracil. Residue R137 participates in (2S)-2-hydroxy-3-oxobutyl phosphate binding.

Belongs to the DMRL synthase family.

It catalyses the reaction (2S)-2-hydroxy-3-oxobutyl phosphate + 5-amino-6-(D-ribitylamino)uracil = 6,7-dimethyl-8-(1-D-ribityl)lumazine + phosphate + 2 H2O + H(+). It participates in cofactor biosynthesis; riboflavin biosynthesis; riboflavin from 2-hydroxy-3-oxobutyl phosphate and 5-amino-6-(D-ribitylamino)uracil: step 1/2. Catalyzes the formation of 6,7-dimethyl-8-ribityllumazine by condensation of 5-amino-6-(D-ribitylamino)uracil with 3,4-dihydroxy-2-butanone 4-phosphate. This is the penultimate step in the biosynthesis of riboflavin. In Christiangramia forsetii (strain DSM 17595 / CGMCC 1.15422 / KT0803) (Gramella forsetii), this protein is 6,7-dimethyl-8-ribityllumazine synthase.